The primary structure comprises 85 residues: COMM domain-containing protein 6 (85 aa).

Met1 is subject to N-acetylmethionine. A COMM domain is found at 18 to 85 (QLIDFEWKLG…KEIAAIIETV (68 aa)).

This sequence belongs to the COMM domain-containing protein 6 family. Component of the commander complex consisting of the CCC subcomplex and the retriever subcomplex. Component of the CCC (COMMD/CCDC22/CCDC93) subcomplex consisting of COMMD1, COMMD2, COMMD3, COMMD4, COMMD5, COMMD6, COMMD7, COMMD8, COMMD9, COMMD10, CCDC22 and CCDC93; within the complex forms a heterodimer with COMMD1. May form a homodimer with isoform 1. Interacts with RELA, RELB, NFKB1/p105. Does not interact with NFKBIB. Interacts with CCDC22, CCDC93, SCNN1B, CUL4A.

It localises to the nucleus. Its subcellular location is the cytoplasm. In terms of biological role, scaffold protein in the commander complex that is essential for endosomal recycling of transmembrane cargos; the commander complex is composed of the CCC subcomplex and the retriever subcomplex. May modulate activity of cullin-RING E3 ubiquitin ligase (CRL) complexes. Down-regulates activation of NF-kappa-B. Inhibits TNF-induced NFKB1 activation. The polypeptide is COMM domain-containing protein 6 (COMMD6) (Bos taurus (Bovine)).